The primary structure comprises 467 residues: Chromosomal replication initiator protein DnaA (467 aa).

Residues 1-79 (MTELDQFWPA…GELPVELRLG (79 aa)) form a domain I, interacts with DnaA modulators region. The segment at 79-129 (GAPTARPAAPVAGNSQPKAKEPAKAAASAPAAPSPAKQAAVKAIGGSHEST) is domain II. Residues 84-126 (RPAAPVAGNSQPKAKEPAKAAASAPAAPSPAKQAAVKAIGGSH) are disordered. Residues 102-121 (KAAASAPAAPSPAKQAAVKA) are compositionally biased toward low complexity. Residues 130–347 (RLNPSFTFDT…GALKRVVAYA (218 aa)) are domain III, AAA+ region. Residues glycine 175, glycine 177, lysine 178, and threonine 179 each coordinate ATP. The interval 348-467 (RFTSQNITLE…YEALLSMLRN (120 aa)) is domain IV, binds dsDNA.

Belongs to the DnaA family. As to quaternary structure, oligomerizes as a right-handed, spiral filament on DNA at oriC.

The protein localises to the cytoplasm. Plays an essential role in the initiation and regulation of chromosomal replication. ATP-DnaA binds to the origin of replication (oriC) to initiate formation of the DNA replication initiation complex once per cell cycle. Binds the DnaA box (a 9 base pair repeat at the origin) and separates the double-stranded (ds)DNA. Forms a right-handed helical filament on oriC DNA; dsDNA binds to the exterior of the filament while single-stranded (ss)DNA is stabiized in the filament's interior. The ATP-DnaA-oriC complex binds and stabilizes one strand of the AT-rich DNA unwinding element (DUE), permitting loading of DNA polymerase. After initiation quickly degrades to an ADP-DnaA complex that is not apt for DNA replication. Binds acidic phospholipids. The chain is Chromosomal replication initiator protein DnaA from Chromobacterium violaceum (strain ATCC 12472 / DSM 30191 / JCM 1249 / CCUG 213 / NBRC 12614 / NCIMB 9131 / NCTC 9757 / MK).